The primary structure comprises 541 residues: Chaperonin GroEL (541 aa).

ATP is bound by residues 29–32, 86–90, Gly-413, and Asp-494; these read TIGP and DGTTT.

The protein belongs to the chaperonin (HSP60) family. Forms a cylinder of 14 subunits composed of two heptameric rings stacked back-to-back. Interacts with the co-chaperonin GroES.

The protein resides in the cytoplasm. The catalysed reaction is ATP + H2O + a folded polypeptide = ADP + phosphate + an unfolded polypeptide.. Together with its co-chaperonin GroES, plays an essential role in assisting protein folding. The GroEL-GroES system forms a nano-cage that allows encapsulation of the non-native substrate proteins and provides a physical environment optimized to promote and accelerate protein folding. This Lachnospira eligens (strain ATCC 27750 / DSM 3376 / VPI C15-48 / C15-B4) (Eubacterium eligens) protein is Chaperonin GroEL.